The sequence spans 305 residues: RxLR effector protein PexRD25 (305 aa).

The N-terminal stretch at 1-16 (MRFLFYMLLACSAVVA) is a signal peptide. The RxLR-dEER motif lies at 44–56 (RLLRDRRSVDEER).

The protein belongs to the RxLR effector family.

The protein localises to the secreted. Its subcellular location is the host nucleus. The protein resides in the host nucleolus. Effector that enhances P.infestans colonization of Nicotiana benthamiana leaves. This is RxLR effector protein PexRD25 from Phytophthora infestans (strain T30-4) (Potato late blight agent).